The sequence spans 358 residues: Peptide chain release factor 1 (358 aa).

At Gln233 the chain carries N5-methylglutamine.

Belongs to the prokaryotic/mitochondrial release factor family. In terms of processing, methylated by PrmC. Methylation increases the termination efficiency of RF1.

The protein localises to the cytoplasm. In terms of biological role, peptide chain release factor 1 directs the termination of translation in response to the peptide chain termination codons UAG and UAA. This Clostridium botulinum (strain ATCC 19397 / Type A) protein is Peptide chain release factor 1.